Reading from the N-terminus, the 603-residue chain is NADH-quinone oxidoreductase subunit C/D (603 aa).

Positions 1 to 193 are NADH dehydrogenase I subunit C; it reads MVNNMTDLTA…DPFTLTKQKE (193 aa). The tract at residues 217–603 is NADH dehydrogenase I subunit D; it reads DFMFLNLGPN…IDFVMSDVDR (387 aa).

This sequence in the N-terminal section; belongs to the complex I 30 kDa subunit family. In the C-terminal section; belongs to the complex I 49 kDa subunit family. As to quaternary structure, NDH-1 is composed of 13 different subunits. Subunits NuoB, CD, E, F, and G constitute the peripheral sector of the complex.

It localises to the cell inner membrane. The enzyme catalyses a quinone + NADH + 5 H(+)(in) = a quinol + NAD(+) + 4 H(+)(out). Functionally, NDH-1 shuttles electrons from NADH, via FMN and iron-sulfur (Fe-S) centers, to quinones in the respiratory chain. The immediate electron acceptor for the enzyme in this species is believed to be ubiquinone. Couples the redox reaction to proton translocation (for every two electrons transferred, four hydrogen ions are translocated across the cytoplasmic membrane), and thus conserves the redox energy in a proton gradient. The polypeptide is NADH-quinone oxidoreductase subunit C/D (Cronobacter sakazakii (strain ATCC BAA-894) (Enterobacter sakazakii)).